The primary structure comprises 292 residues: MSSLPTPLPPYKWTLLTAGNANVVYKSDETDLLLRLRRNRNAPSTAEVDEYLTGTIRPAIGPFLFHYTVVNLPLGFLESLPEAENLDLGEPLGLLMENLGPKPNETNVLKSHAVKINYSDNWESYTVELKPKWLLQSPTAPKDSINCRTCALQLKREKPRICPLKLFNEDEQTSLQALEDVFPGTQKQFEPLAKFFSNSELFAEIRHMQHGDELGILGYANYVQVPPQFVTAMTMRDVSLFVHVQGDSVNGKIVDADLKSVSEKRDYWASLETDLIEGGWYEKPGTNCLLRN.

The short motif at 128–132 is the EXKPK motif element; sequence ELKPK.

Belongs to the IPK1 type 1 family.

Its subcellular location is the nucleus. It catalyses the reaction 1D-myo-inositol 1,3,4,5,6-pentakisphosphate + ATP = 1D-myo-inositol hexakisphosphate + ADP + H(+). Its function is as follows. Has kinase activity and phosphorylates inositol-1,3,4,5,6-pentakisphosphate (Ins(1,3,4,5,6)P5) to produce 1,2,3,4,5,6-hexakisphosphate (InsP6), also known as phytate. The protein is Inositol-pentakisphosphate 2-kinase (IPK1) of Yarrowia lipolytica (strain CLIB 122 / E 150) (Yeast).